Consider the following 975-residue polypeptide: Ionotropic receptor 21a (975 aa).

Positions 1-21 (MFKRIVLAVINLVFLIVSTTA) are cleaved as a signal peptide. N-linked (GlcNAc...) asparagine glycosylation is found at Asn67, Asn177, and Asn355. The helical transmembrane segment at 433–453 (WPVWVAVILIYLLAIFPLAFS) threads the bilayer. Asn464 carries N-linked (GlcNAc...) asparagine glycosylation. A helical transmembrane segment spans residues 505 to 525 (IYWVFTIIITACYTGSIIAFI). 3 N-linked (GlcNAc...) asparagine glycosylation sites follow: Asn561, Asn586, and Asn611. A helical membrane pass occupies residues 708–728 (MFLLMLFGYVVALGVLISEWV). Disordered stretches follow at residues 757 to 839 (ATAG…HSLS) and 911 to 938 (SPHS…RKEM). Polar residues-rich tracts occupy residues 760–777 (GSDN…TNRN) and 788–800 (VENS…NGSA). 2 N-linked (GlcNAc...) asparagine glycosylation sites follow: Asn763 and Asn797.

This sequence belongs to the glutamate-gated ion channel (TC 1.A.10.1) family. In terms of tissue distribution, in both female and male antenna, expressed specifically in 3 sensory neurons of flagellomere 13 segment (at protein level).

The protein localises to the cell projection. The protein resides in the cilium membrane. Integral part of a neural sensory system in the antenna that provides the neural basis for the response to environmental changes in temperature (thermosensation). Specifically, required for thermosensing by the cooling cell. Plays a role in heat seeking and heat-stimulated blood feeding behavior. This Anopheles gambiae (African malaria mosquito) protein is Ionotropic receptor 21a.